Reading from the N-terminus, the 313-residue chain is Putative S-adenosyl-L-methionine-dependent methyltransferase MAV_5150 (313 aa).

S-adenosyl-L-methionine contacts are provided by residues Asp-139 and 168–169 (DL).

The protein belongs to the UPF0677 family.

In terms of biological role, exhibits S-adenosyl-L-methionine-dependent methyltransferase activity. The sequence is that of Putative S-adenosyl-L-methionine-dependent methyltransferase MAV_5150 from Mycobacterium avium (strain 104).